Here is a 273-residue protein sequence, read N- to C-terminus: Programmed cell death 1 ligand 2 (273 aa).

An N-terminal signal peptide occupies residues 1–19 (MIFLLLMLSLELQLHQIAA). The Extracellular portion of the chain corresponds to 20–220 (LFTVTVPKEL…SQMEPRTHPT (201 aa)). The Ig-like V-type domain occupies 21–118 (FTVTVPKELY…AWDYKYLTLK (98 aa)). Residues asparagine 37, asparagine 64, asparagine 157, asparagine 163, and asparagine 189 are each glycosylated (N-linked (GlcNAc...) asparagine). 2 disulfides stabilise this stretch: cysteine 42-cysteine 102 and cysteine 143-cysteine 192. In terms of domain architecture, Ig-like C2-type spans 122 to 203 (SYRKINTHIL…FWNTHVRELT (82 aa)). The helical transmembrane segment at 221–241 (WLLHIFIPFCIIAFIFIATVI) threads the bilayer. At 242–273 (ALRKQLCQKLYSSKDTTKRPVTTTKREVNSAI) the chain is on the cytoplasmic side.

The protein belongs to the immunoglobulin superfamily. BTN/MOG family. In terms of assembly, interacts with PDCD1. Highly expressed in heart, placenta, pancreas, lung and liver and weakly expressed in spleen, lymph nodes and thymus.

Its subcellular location is the secreted. The protein localises to the endomembrane system. It is found in the cell membrane. Functionally, involved in the costimulatory signal, essential for T-cell proliferation and IFNG production in a PDCD1-independent manner. Interaction with PDCD1 inhibits T-cell proliferation by blocking cell cycle progression and cytokine production. The protein is Programmed cell death 1 ligand 2 (PDCD1LG2) of Homo sapiens (Human).